The chain runs to 276 residues: Ribosomal RNA small subunit methyltransferase A (276 aa).

The S-adenosyl-L-methionine site is built by Asn-27, Leu-29, Gly-54, Glu-75, Asp-101, and Asn-122.

The protein belongs to the class I-like SAM-binding methyltransferase superfamily. rRNA adenine N(6)-methyltransferase family. RsmA subfamily.

It is found in the cytoplasm. The enzyme catalyses adenosine(1518)/adenosine(1519) in 16S rRNA + 4 S-adenosyl-L-methionine = N(6)-dimethyladenosine(1518)/N(6)-dimethyladenosine(1519) in 16S rRNA + 4 S-adenosyl-L-homocysteine + 4 H(+). Functionally, specifically dimethylates two adjacent adenosines (A1518 and A1519) in the loop of a conserved hairpin near the 3'-end of 16S rRNA in the 30S particle. May play a critical role in biogenesis of 30S subunits. The protein is Ribosomal RNA small subunit methyltransferase A of Brucella abortus biovar 1 (strain 9-941).